The chain runs to 382 residues: uncharacterized protein (382 aa).

A run of 12 helical transmembrane segments spans residues glycine 14–alanine 34, valine 45–isoleucine 65, phenylalanine 79–alanine 99, phenylalanine 102–serine 122, leucine 131–serine 151, leucine 157–phenylalanine 177, leucine 204–proline 224, alanine 235–isoleucine 255, valine 270–proline 290, alanine 291–cysteine 311, alanine 325–methionine 345, and phenylalanine 348–leucine 368.

It belongs to the major facilitator superfamily. YcaD (TC 2.A.1.26) family.

Its subcellular location is the cell inner membrane. This is an uncharacterized protein from Shigella flexneri serotype 5b (strain 8401).